The following is a 78-amino-acid chain: Putative defensin-like protein 202 (78 aa).

The first 29 residues, 1 to 29 (MAKTQNFVCFTAVLLILILVSTEIPMIEG), serve as a signal peptide directing secretion. Disulfide bonds link C44-C65, C49-C74, and C53-C76.

It belongs to the DEFL family.

The protein resides in the secreted. This chain is Putative defensin-like protein 202, found in Arabidopsis thaliana (Mouse-ear cress).